The chain runs to 157 residues: Deoxyuridine 5'-triphosphate nucleotidohydrolase (157 aa).

Residues 76–78 (RSG), Asn89, 93–95 (TID), and Lys103 each bind substrate.

Belongs to the dUTPase family. Requires Mg(2+) as cofactor.

It carries out the reaction dUTP + H2O = dUMP + diphosphate + H(+). It functions in the pathway pyrimidine metabolism; dUMP biosynthesis; dUMP from dCTP (dUTP route): step 2/2. Functionally, this enzyme is involved in nucleotide metabolism: it produces dUMP, the immediate precursor of thymidine nucleotides and it decreases the intracellular concentration of dUTP so that uracil cannot be incorporated into DNA. The polypeptide is Deoxyuridine 5'-triphosphate nucleotidohydrolase (Brucella abortus (strain 2308)).